The primary structure comprises 329 residues: MANYAAMTGWGMAVPERVLTNADLERIVETSDEWIQTRTGIRERRVAGPGEYTSTLSIAAGRAALERAGLDAAQIDTVILATCTPDRPFPATACTIQAGIGARRAAAFDLVAACSGFVYGLNVATSMIRSGAARNVLFVACDIFTHFINWNDRNTCVLFGDGAGAVVLQPSDEPAGLISCVLGADGEQEDLMAVDAGGTRLPATPELLEQGRQYVYMNGREIFKHAVREMAASSLEAIRVAGLSPDDIALVVPHQANLRIIEATARRLEVPMERVFVNLDRYGNTSAASVPIALVEAVEQQRLRKGDYALLTAFGGGLTWASAVIRWTA.

Residues Cys-114 and His-254 contribute to the active site. Residues 255–259 (QANLR) form an ACP-binding region. Asn-284 is a catalytic residue.

It belongs to the thiolase-like superfamily. FabH family. In terms of assembly, homodimer.

It localises to the cytoplasm. The catalysed reaction is malonyl-[ACP] + acetyl-CoA + H(+) = 3-oxobutanoyl-[ACP] + CO2 + CoA. The protein operates within lipid metabolism; fatty acid biosynthesis. In terms of biological role, catalyzes the condensation reaction of fatty acid synthesis by the addition to an acyl acceptor of two carbons from malonyl-ACP. Catalyzes the first condensation reaction which initiates fatty acid synthesis and may therefore play a role in governing the total rate of fatty acid production. Possesses both acetoacetyl-ACP synthase and acetyl transacylase activities. Its substrate specificity determines the biosynthesis of branched-chain and/or straight-chain of fatty acids. The polypeptide is Beta-ketoacyl-[acyl-carrier-protein] synthase III (Roseiflexus sp. (strain RS-1)).